Consider the following 418-residue polypeptide: E3 ubiquitin-protein ligase pellino homolog 1 (418 aa).

The region spanning 13 to 200 is the FHA; atypical domain; the sequence is APVKYGELIV…MHPRNGFTED (188 aa). Position 121 is a phosphoserine; by ATM (S121). T127 is modified (phosphothreonine; by ATM). A ring-like domain; necessary for ubiqitination of RIPK3 region spans residues 311 to 399; that stretch reads CGHVHGYHNW…TFHAACPFCA (89 aa).

The protein belongs to the pellino family. As to quaternary structure, interacts with MAP3K7. Upon IL1B treatment, forms a complex with TRAF6, IRAK1, IRAK4 and MYD88; this complex recruits MAP3K7/TAK1, TAB1 and TAB2 to mediate NF-kappa-B activation. Direct binding of SMAD6 to PELI1 prevents the complex formation and hence negatively regulates IL1R-TLR signaling and eventually NF-kappa-B-mediated gene expression. Interacts (via atypical FHA domain) with RIPK3; preferentially binds to the 'Thr-182' phosphorylated form of RIPK3. Interacts with RIPK1 and IRAK1. In terms of processing, phosphorylation by IRAK1 and IRAK4 enhances its E3 ligase activity. Phosphorylated by ATM in response to DNA damage, promoting localization to DNA double-strand breaks (DSBs) and ability to mediate 'Lys-63'-linked ubiquitination of NBN. Post-translationally, sumoylated. In terms of tissue distribution, expressed at high levels in normal skin but decreased in keratinocytes from toxic epidermal necrolysis (TEN) patients (at protein level).

The protein resides in the chromosome. It catalyses the reaction S-ubiquitinyl-[E2 ubiquitin-conjugating enzyme]-L-cysteine + [acceptor protein]-L-lysine = [E2 ubiquitin-conjugating enzyme]-L-cysteine + N(6)-ubiquitinyl-[acceptor protein]-L-lysine.. The protein operates within protein modification; protein ubiquitination. E3 ubiquitin ligase catalyzing the covalent attachment of ubiquitin moieties onto substrate proteins. Involved in the TLR and IL-1 signaling pathways via interaction with the complex containing IRAK kinases and TRAF6. Acts as a positive regulator of inflammatory response in microglia through activation of NF-kappa-B and MAP kinase. Mediates 'Lys-63'-linked polyubiquitination of IRAK1 allowing subsequent NF-kappa-B activation. Conjugates 'Lys-63'-linked ubiquitin chains to the adapter protein ASC/PYCARD, which in turn is crucial for NLRP3 inflammasome activation. Mediates 'Lys-48'-linked polyubiquitination of RIPK3 leading to its subsequent proteasome-dependent degradation; preferentially recognizes and mediates the degradation of the 'Thr-182' phosphorylated form of RIPK3. Negatively regulates necroptosis by reducing RIPK3 expression. Mediates 'Lys-63'-linked ubiquitination of RIPK1. Following phosphorylation by ATM, catalyzes 'Lys-63'-linked ubiquitination of NBN, promoting DNA repair via homologous recombination. Negatively regulates activation of the metabolic mTORC1 signaling pathway by mediating 'Lys-63'-linked ubiquitination of mTORC1-inhibitory protein TSC1 and thereby promoting TSC1/TSC2 complex stability. The polypeptide is E3 ubiquitin-protein ligase pellino homolog 1 (Homo sapiens (Human)).